We begin with the raw amino-acid sequence, 451 residues long: Chromosomal replication initiator protein DnaA (451 aa).

Residues 1–72 (MSLPTSLWDK…TELLDELSDT (72 aa)) are domain I, interacts with DnaA modulators. Residues 72–114 (TPPQIRLQIGSRSTEMPTKNSHEPSHRKAAAPPAGTTISHTQA) are domain II. Residues 81–90 (GSRSTEMPTK) show a composition bias toward polar residues. The disordered stretch occupies residues 81–106 (GSRSTEMPTKNSHEPSHRKAAAPPAG). Residues 115 to 331 (NINSNFTFDS…GALKRVIANA (217 aa)) form a domain III, AAA+ region region. Positions 159, 161, 162, and 163 each coordinate ATP. A domain IV, binds dsDNA region spans residues 332–451 (HFTGQSITVD…YKNLMRILSG (120 aa)).

This sequence belongs to the DnaA family. As to quaternary structure, oligomerizes as a right-handed, spiral filament on DNA at oriC.

It localises to the cytoplasm. Plays an essential role in the initiation and regulation of chromosomal replication. ATP-DnaA binds to the origin of replication (oriC) to initiate formation of the DNA replication initiation complex once per cell cycle. Binds the DnaA box (a 9 base pair repeat at the origin) and separates the double-stranded (ds)DNA. Forms a right-handed helical filament on oriC DNA; dsDNA binds to the exterior of the filament while single-stranded (ss)DNA is stabiized in the filament's interior. The ATP-DnaA-oriC complex binds and stabilizes one strand of the AT-rich DNA unwinding element (DUE), permitting loading of DNA polymerase. After initiation quickly degrades to an ADP-DnaA complex that is not apt for DNA replication. Binds acidic phospholipids. In Coxiella burnetii (strain CbuK_Q154) (Coxiella burnetii (strain Q154)), this protein is Chromosomal replication initiator protein DnaA.